We begin with the raw amino-acid sequence, 331 residues long: Small ribosomal subunit protein uS2 (331 aa).

This sequence belongs to the universal ribosomal protein uS2 family.

In Bradyrhizobium diazoefficiens (strain JCM 10833 / BCRC 13528 / IAM 13628 / NBRC 14792 / USDA 110), this protein is Small ribosomal subunit protein uS2.